An 87-amino-acid chain; its full sequence is NADH-ubiquinone oxidoreductase chain 4L (87 aa).

A run of 2 helical transmembrane segments spans residues 22–42 and 49–69; these read FLSF…FIIG and LFLI…SLLV.

Belongs to the complex I subunit 4L family.

The protein resides in the mitochondrion membrane. The catalysed reaction is a ubiquinone + NADH + 5 H(+)(in) = a ubiquinol + NAD(+) + 4 H(+)(out). Its function is as follows. Core subunit of the mitochondrial membrane respiratory chain NADH dehydrogenase (Complex I) that is believed to belong to the minimal assembly required for catalysis. Complex I functions in the transfer of electrons from NADH to the respiratory chain. The immediate electron acceptor for the enzyme is believed to be ubiquinone. The polypeptide is NADH-ubiquinone oxidoreductase chain 4L (ND4L) (Apis mellifera ligustica (Common honeybee)).